A 178-amino-acid chain; its full sequence is Large ribosomal subunit protein uL6 (178 aa).

It belongs to the universal ribosomal protein uL6 family. In terms of assembly, part of the 50S ribosomal subunit.

In terms of biological role, this protein binds to the 23S rRNA, and is important in its secondary structure. It is located near the subunit interface in the base of the L7/L12 stalk, and near the tRNA binding site of the peptidyltransferase center. This is Large ribosomal subunit protein uL6 from Francisella tularensis subsp. tularensis (strain WY96-3418).